The chain runs to 543 residues: Small conductance calcium-activated potassium channel protein 1 (543 aa).

Residues 1 to 92 (MNSHSYNGSV…SGKPSNVGHR (92 aa)) are disordered. Acidic residues predominate over residues 65 to 76 (DQDDDEDDEEDE). The helical transmembrane segment at 111–131 (LIFGMFGIVVMVTETELSWGV) threads the bilayer. A helical transmembrane segment spans residues 140 to 160 (FALKCLISLSTAILLGLVVLY). Residues 179–199 (IAMTCERVFLISLELAVCAIH) form a helical membrane-spanning segment. Residues 228 to 248 (VLLSIPMFLRLYLLGRVMLLH) form a helical membrane-spanning segment. Residues 277-297 (LMTICPGTVLLVFSISSWIIA) form a helical membrane-spanning segment. Residues 317-337 (FLGAMWLISITFLSIGYGDMV) constitute an intramembrane region (pore-forming). A helical transmembrane segment spans residues 346 to 366 (VCLLTGIMGAGCTALVVAVVA). Residues 384-463 (DTQLTKRVKN…LTDLAKTQTV (80 aa)) are calmodulin-binding. Residues 505–543 (QAIRPPPPPLPPRPGPGPQDQAARSSPCRWTPVAPSDCG) form a disordered region. Over residues 508-521 (RPPPPPLPPRPGPG) the composition is skewed to pro residues.

This sequence belongs to the potassium channel KCNN family. KCa2.1/KCNN1 subfamily. As to quaternary structure, homodimer. Heteromultimer with KCNN2 and KCNN3. The complex is composed of 4 channel subunits each of which binds to a calmodulin subunit which regulates the channel activity through calcium-binding. Interacts with calmodulin.

The protein localises to the membrane. Its subcellular location is the cytoplasm. It localises to the myofibril. It is found in the sarcomere. The protein resides in the z line. The enzyme catalyses K(+)(in) = K(+)(out). With respect to regulation, inhibited by bee venom neurotoxin apamin. Inhibited by d-tubocurarine and tetraethylammonium (TEA). Functionally, small conductance calcium-activated potassium channel that mediates the voltage-independent transmembrane transfer of potassium across the cell membrane through a constitutive interaction with calmodulin which binds the intracellular calcium allowing its opening. The current is characterized by a voltage-independent activation, an intracellular calcium concentration increase-dependent activation and a single-channel conductance of about 3 picosiemens. Also presents an inwardly rectifying current, thus reducing its already small outward conductance of potassium ions, which is particularly the case when the membrane potential displays positive values, above + 20 mV. Activation is followed by membrane hyperpolarization. Thought to regulate neuronal excitability by contributing to the slow component of synaptic afterhyperpolarization. This is Small conductance calcium-activated potassium channel protein 1 from Homo sapiens (Human).